A 229-amino-acid chain; its full sequence is Prolactin (229 aa).

A signal peptide spans methionine 1 to serine 30. A disulfide bridge connects residues cysteine 34 and cysteine 41. Serine 56 bears the Phosphoserine mark. Asparagine 61 carries N-linked (GlcNAc...) asparagine; partial glycosylation. Residues serine 64 and serine 120 each carry the phosphoserine modification. Intrachain disulfides connect cysteine 88–cysteine 204 and cysteine 221–cysteine 229.

The protein belongs to the somatotropin/prolactin family. Interacts with PRLR.

The protein resides in the secreted. Prolactin acts primarily on the mammary gland by promoting lactation. The chain is Prolactin (PRL) from Equus caballus (Horse).